Reading from the N-terminus, the 285-residue chain is RNA exonuclease 4 (285 aa).

Positions 1 to 14 are enriched in polar residues; the sequence is MAKLSQNWKKLSSK. The interval 1 to 35 is disordered; that stretch reads MAKLSQNWKKLSSKIQDKPKNGSVKKPTLKGKISK. Residues 116 to 267 enclose the Exonuclease domain; the sequence is YVAIDCEFVG…EDARATMLLF (152 aa).

It belongs to the REXO4 family.

It is found in the nucleus. Exoribonuclease involved in ribosome biosynthesis. Involved in the processing of ITS1, the internal transcribed spacer localized between the 18S and 5.8S rRNAs. This is RNA exonuclease 4 (REX4) from Candida albicans (strain SC5314 / ATCC MYA-2876) (Yeast).